The chain runs to 312 residues: Short chain dehydrogenase pgmD (312 aa).

Positions 46, 47, 171, 207, 211, and 242 each coordinate NADP(+). The Proton donor role is filled by Y207. K211 acts as the Lowers pKa of active site Tyr in catalysis.

It belongs to the short-chain dehydrogenases/reductases (SDR) family.

Its pathway is pigment biosynthesis. The protein operates within secondary metabolite biosynthesis. In terms of biological role, short chain dehydrogenase; part of the gene cluster that mediates the biosynthesis of pleosporalin A, ascomycone A, as well as a third cryptic naphthoquinone derived pigment, all responsible for the coloration of conidia. Essential for the production of pleosporalin A, but not the 2 other final products. The pathway begins with the biosynthesis of the cyclized heptaketide 3-acetonyl-1,6,8-trihydroxy-2-naphthaldehyde by the NR-PKS pgmA. The C-6 hydroxyl group is further methylated by the O-methyltransferase pgmB to yield fusarubinaldehyde which is in turn oxidized by the cytochrome P450 monooxygenase pgmC at C-9. The C-1 hydroxyl group is then methylated spontaneously. Although pgmE, pgmD and pgmH are essential for the production of pleosporalin A, it is not the case for the 2 other final products and it remains difficult to assign a specific function to each enzyme. PgmF and pgmG seem not to be involved in pigment biosynthesis although they were regulated by the cluster-specific transcription factor pgmR. The chain is Short chain dehydrogenase pgmD from Aspergillus terreus.